The chain runs to 308 residues: Glutaminase (308 aa).

7 residues coordinate substrate: Ser-66, Asn-117, Glu-161, Asn-168, Tyr-192, Tyr-244, and Val-262.

The protein belongs to the glutaminase family. In terms of assembly, homotetramer.

The catalysed reaction is L-glutamine + H2O = L-glutamate + NH4(+). This chain is Glutaminase, found in Photorhabdus laumondii subsp. laumondii (strain DSM 15139 / CIP 105565 / TT01) (Photorhabdus luminescens subsp. laumondii).